We begin with the raw amino-acid sequence, 236 residues long: Small ribosomal subunit protein eS6 (236 aa).

This sequence belongs to the eukaryotic ribosomal protein eS6 family. As to quaternary structure, component of the small ribosomal subunit. Part of the small subunit (SSU) processome, composed of more than 70 proteins and the RNA chaperone small nucleolar RNA (snoRNA) U3. Post-translationally, ribosomal protein S6 is the major substrate of protein kinases in eukaryote ribosomes.

It localises to the cytoplasm. The protein resides in the nucleus. It is found in the nucleolus. Component of the 40S small ribosomal subunit. Plays an important role in controlling cell growth and proliferation through the selective translation of particular classes of mRNA. Part of the small subunit (SSU) processome, first precursor of the small eukaryotic ribosomal subunit. During the assembly of the SSU processome in the nucleolus, many ribosome biogenesis factors, an RNA chaperone and ribosomal proteins associate with the nascent pre-rRNA and work in concert to generate RNA folding, modifications, rearrangements and cleavage as well as targeted degradation of pre-ribosomal RNA by the RNA exosome. The chain is Small ribosomal subunit protein eS6 (rps6) from Dictyostelium discoideum (Social amoeba).